The following is a 448-amino-acid chain: Protein ECM7 (448 aa).

Topologically, residues 1 to 28 are cytoplasmic; that stretch reads MVMSRIRDTIARPFQNLTALEKVVQWLR. The chain crosses the membrane as a helical span at residues 29–49; that stretch reads LGTTLLIISFGLALTVGPLSS. At 50 to 204 the chain is on the extracellular side; that stretch reads PRTLYMSRLD…MRSLKHKKAN (155 aa). Residues 205-225 form a helical membrane-spanning segment; it reads VLHLLYAVISFQVCMLFFMIW. Topologically, residues 226 to 246 are cytoplasmic; it reads YYYIKGRFMNALKERALVHIN. Residues 247–267 form a helical membrane-spanning segment; that stretch reads SLLSLVVFIGGLISSISLAWV. Topologically, residues 268-287 are extracellular; it reads NYTIQSRINTELEAFGFSYH. Residues 288-308 form a helical membrane-spanning segment; the sequence is LGVTWFALLWCFAGLISVSCL. Residues 309–448 lie on the Cytoplasmic side of the membrane; the sequence is AWSGLEWCIS…VIKPSSALQF (140 aa). Composition is skewed to polar residues over residues 351 to 363 and 383 to 406; these read YSQRYPQRQSTSG and VDLNSENDANTSLDHGNPTANISN. Disordered stretches follow at residues 351-411 and 427-448; these read YSQR…GKHE and RSSNDSEESMQRVIKPSSALQF.

The protein resides in the membrane. May be involved in cell wall organization and biogenesis. This is Protein ECM7 (ECM7) from Saccharomyces cerevisiae (strain ATCC 204508 / S288c) (Baker's yeast).